Here is a 343-residue protein sequence, read N- to C-terminus: uncharacterized protein (343 aa).

3 disordered regions span residues methionine 1–threonine 25, lysine 62–aspartate 119, and asparagine 169–serine 188. Residues lysine 62–glutamine 71 are compositionally biased toward basic residues. Basic and acidic residues predominate over residues asparagine 72–glutamate 81. Positions asparagine 83–asparagine 107 are enriched in acidic residues.

This is an uncharacterized protein from Acanthamoeba polyphaga (Amoeba).